A 361-amino-acid polypeptide reads, in one-letter code: Hydroxycarboxylate dehydrogenase B (361 aa).

Residues H48, 122-124, 178-182, H234, N270, and 313-316 each bind NAD(+); these read GRI, LLDYA, and GEWE.

Belongs to the LDH2/MDH2 oxidoreductase family.

It catalyses the reaction 2-hydroxyglutarate + NADP(+) = 2-oxoglutarate + NADPH + H(+). The catalysed reaction is 2-hydroxyglutarate + NAD(+) = 2-oxoglutarate + NADH + H(+). It carries out the reaction 3-phenyllactate + NADP(+) = 3-phenylpyruvate + NADPH + H(+). The enzyme catalyses 3-phenyllactate + NAD(+) = 3-phenylpyruvate + NADH + H(+). It catalyses the reaction (2R)-2-hydroxy-3-(4-hydroxyphenyl)propanoate + NAD(+) = 3-(4-hydroxyphenyl)pyruvate + NADH + H(+). The catalysed reaction is (2R)-2-hydroxy-3-(4-hydroxyphenyl)propanoate + NADP(+) = 3-(4-hydroxyphenyl)pyruvate + NADPH + H(+). It carries out the reaction (2R)-3-(3,4-dihydroxyphenyl)lactate + NADP(+) = 3-(3,4-dihydroxyphenyl)pyruvate + NADPH + H(+). The enzyme catalyses (2R)-3-(3,4-dihydroxyphenyl)lactate + NAD(+) = 3-(3,4-dihydroxyphenyl)pyruvate + NADH + H(+). Catalyzes the NAD(P)H-dependent reduction of 2-oxoglutarate, phenylpyruvate and (4-hydroxyphenyl)pyruvate, leading to the respective 2-hydroxycarboxylate in vitro. Shows a preference for NADPH over NADH as a redox partner. Do not catalyze the reverse reactions. This chain is Hydroxycarboxylate dehydrogenase B, found in Escherichia coli (strain K12).